The primary structure comprises 556 residues: MSVSAFNRRWAAVILEALTRHGVRHVCIAPGSRSTPLTLAAAENPAFIHHTHFDERGLGHLALGLAKVSQQPVAVIVTSGTAVANLYPALIEAGLTGEKLILLTADRPPELIDCGANQAIRQAGMFASHPSQTLSLPRPTQDIPARWLVSTIDNALAMLHAGALHINCPFAEPLYGDMNDTGLVWQQRLGDWWQDEKPWLREARRLASDKQRDWFFWRQKRGVVVAGRMSAEEGKKVAQWAQTLGWPLIGDVLSQTGQPLPCADLWLGNAKAVTELQQAQIVVQLGSSLTGKRLLQWQATCEPEEYWVIDNIEGRLDPAHHRGRRLVAKIADWLELHPAEKRKPWCVEIPRLAELAWQRVVAQRDTFGEAQLAHRIRDYLPEQGQLFVGNSLVVRLIDALSQLPAGYPVYSNRGASGIDGLLSTAAGVQRASAKSTLAIVGDLSALYDLNALALLRQVSAPFVLIVVNNNGGQIFSLLPTPQSKRERFYLMPQNVHFDHAAAMFNLRYHRPENWEELESALAGAWRTPATTVIELVVNDTDGAQTLQQLLAQVSHL.

It belongs to the TPP enzyme family. MenD subfamily. As to quaternary structure, homodimer. It depends on Mg(2+) as a cofactor. The cofactor is Mn(2+). Thiamine diphosphate is required as a cofactor.

The catalysed reaction is isochorismate + 2-oxoglutarate + H(+) = 5-enolpyruvoyl-6-hydroxy-2-succinyl-cyclohex-3-ene-1-carboxylate + CO2. Its pathway is quinol/quinone metabolism; 1,4-dihydroxy-2-naphthoate biosynthesis; 1,4-dihydroxy-2-naphthoate from chorismate: step 2/7. It functions in the pathway quinol/quinone metabolism; menaquinone biosynthesis. In terms of biological role, catalyzes the thiamine diphosphate-dependent decarboxylation of 2-oxoglutarate and the subsequent addition of the resulting succinic semialdehyde-thiamine pyrophosphate anion to isochorismate to yield 2-succinyl-5-enolpyruvyl-6-hydroxy-3-cyclohexene-1-carboxylate (SEPHCHC). This Salmonella paratyphi B (strain ATCC BAA-1250 / SPB7) protein is 2-succinyl-5-enolpyruvyl-6-hydroxy-3-cyclohexene-1-carboxylate synthase.